A 242-amino-acid polypeptide reads, in one-letter code: uncharacterized protein (242 aa).

The 114-residue stretch at 3–116 (TALVIDDEPF…RLRKTVKRLS (114 aa)) folds into the Response regulatory domain. Asp54 bears the 4-aspartylphosphate mark. The HTH LytTR-type domain maps to 139–240 (IPCIGHNRIV…LKLLKEMLGL (102 aa)).

This is an uncharacterized protein from Vibrio vulnificus (strain CMCP6).